Reading from the N-terminus, the 173-residue chain is uncharacterized protein (173 aa).

A run of 4 helical transmembrane segments spans residues 9 to 29 (FSICICQIFIIYFIFFLLLCV), 32 to 52 (ICSALSNGFNFLIIYGGTFFH), 100 to 120 (MFLCFFSSIVFASAFVFSFIV), and 127 to 147 (FLFLSLNSGFSFTGYITGLYP).

The protein resides in the membrane. This is an uncharacterized protein from Saccharomyces cerevisiae (strain ATCC 204508 / S288c) (Baker's yeast).